Consider the following 205-residue polypeptide: Ribosomal RNA small subunit methyltransferase G (205 aa).

S-adenosyl-L-methionine contacts are provided by residues Gly73, Leu78, 124–125 (VE), and Arg139.

This sequence belongs to the methyltransferase superfamily. RNA methyltransferase RsmG family.

The protein localises to the cytoplasm. It carries out the reaction guanosine(527) in 16S rRNA + S-adenosyl-L-methionine = N(7)-methylguanosine(527) in 16S rRNA + S-adenosyl-L-homocysteine. Functionally, specifically methylates the N7 position of guanine in position 527 of 16S rRNA. The protein is Ribosomal RNA small subunit methyltransferase G of Methylobacillus flagellatus (strain ATCC 51484 / DSM 6875 / VKM B-1610 / KT).